We begin with the raw amino-acid sequence, 360 residues long: Photosystem II protein D1 (360 aa).

Transmembrane regions (helical) follow at residues Tyr-29–Ser-46, His-118–Leu-133, and Trp-142–Ala-156. A chlorophyll a-binding site is contributed by His-118. Tyr-126 lines the pheophytin a pocket. Residues Asp-170 and Glu-189 each coordinate [CaMn4O5] cluster. The chain crosses the membrane as a helical span at residues Phe-197–Leu-218. His-198 is a binding site for chlorophyll a. A quinone-binding positions include His-215 and Ser-264–Phe-265. His-215 provides a ligand contact to Fe cation. His-272 contacts Fe cation. Residues Phe-274 to Met-288 traverse the membrane as a helical segment. [CaMn4O5] cluster-binding residues include His-332, Glu-333, Asp-342, and Ala-344. A propeptide spanning residues Ser-345 to Gly-360 is cleaved from the precursor.

The protein belongs to the reaction center PufL/M/PsbA/D family. In terms of assembly, PSII is composed of 1 copy each of membrane proteins PsbA, PsbB, PsbC, PsbD, PsbE, PsbF, PsbH, PsbI, PsbJ, PsbK, PsbL, PsbM, PsbT, PsbX, PsbY, PsbZ, Psb30/Ycf12, at least 3 peripheral proteins of the oxygen-evolving complex and a large number of cofactors. It forms dimeric complexes. The cofactor is The D1/D2 heterodimer binds P680, chlorophylls that are the primary electron donor of PSII, and subsequent electron acceptors. It shares a non-heme iron and each subunit binds pheophytin, quinone, additional chlorophylls, carotenoids and lipids. D1 provides most of the ligands for the Mn4-Ca-O5 cluster of the oxygen-evolving complex (OEC). There is also a Cl(-1) ion associated with D1 and D2, which is required for oxygen evolution. The PSII complex binds additional chlorophylls, carotenoids and specific lipids.. Tyr-161 forms a radical intermediate that is referred to as redox-active TyrZ, YZ or Y-Z. In terms of processing, C-terminally processed by CTPA; processing is essential to allow assembly of the oxygen-evolving complex and thus photosynthetic growth.

It is found in the plastid. The protein localises to the chloroplast thylakoid membrane. It carries out the reaction 2 a plastoquinone + 4 hnu + 2 H2O = 2 a plastoquinol + O2. Photosystem II (PSII) is a light-driven water:plastoquinone oxidoreductase that uses light energy to abstract electrons from H(2)O, generating O(2) and a proton gradient subsequently used for ATP formation. It consists of a core antenna complex that captures photons, and an electron transfer chain that converts photonic excitation into a charge separation. The D1/D2 (PsbA/PsbD) reaction center heterodimer binds P680, the primary electron donor of PSII as well as several subsequent electron acceptors. In Palmaria palmata (Dulse), this protein is Photosystem II protein D1.